The sequence spans 414 residues: 3-phosphoshikimate 1-carboxyvinyltransferase (414 aa).

Positions 20, 21, and 25 each coordinate 3-phosphoshikimate. Lysine 20 serves as a coordination point for phosphoenolpyruvate. Glycine 85 and arginine 113 together coordinate phosphoenolpyruvate. Residues serine 154, serine 155, glutamine 156, serine 181, aspartate 296, and lysine 323 each contribute to the 3-phosphoshikimate site. Glutamine 156 provides a ligand contact to phosphoenolpyruvate. Catalysis depends on aspartate 296, which acts as the Proton acceptor. Phosphoenolpyruvate contacts are provided by arginine 327, arginine 371, and lysine 395.

This sequence belongs to the EPSP synthase family. In terms of assembly, monomer.

It is found in the cytoplasm. The enzyme catalyses 3-phosphoshikimate + phosphoenolpyruvate = 5-O-(1-carboxyvinyl)-3-phosphoshikimate + phosphate. Its pathway is metabolic intermediate biosynthesis; chorismate biosynthesis. Functionally, catalyzes the transfer of the enolpyruvyl moiety of phosphoenolpyruvate (PEP) to the 5-hydroxyl of shikimate-3-phosphate (S3P) to produce enolpyruvyl shikimate-3-phosphate and inorganic phosphate. The sequence is that of 3-phosphoshikimate 1-carboxyvinyltransferase from Saccharolobus islandicus (strain M.14.25 / Kamchatka #1) (Sulfolobus islandicus).